We begin with the raw amino-acid sequence, 220 residues long: UPF0758 protein CKO_05095 (220 aa).

One can recognise an MPN domain in the interval 98-220 (ALLSPEMTRE…YVSFAERGWI (123 aa)). Positions 169, 171, and 182 each coordinate Zn(2+). The JAMM motif motif lies at 169–182 (HNHPSGCAEPSKAD).

This sequence belongs to the UPF0758 family. YicR subfamily.

The polypeptide is UPF0758 protein CKO_05095 (Citrobacter koseri (strain ATCC BAA-895 / CDC 4225-83 / SGSC4696)).